The following is a 198-amino-acid chain: Beta-crystallin A1 (198 aa).

Residues 1–13 are N-terminal arm; it reads MAQINPLPVPLGP. Beta/gamma crystallin 'Greek key' domains are found at residues 14–53 and 54–100; these read WKITVYDQENFQGKRMEFTSSCANIMECGFDNIRSLKVEC and GGWI…RPIC. Positions 101 to 106 are connecting peptide; it reads SANHKE. 2 consecutive Beta/gamma crystallin 'Greek key' domains span residues 107–148 and 149–197; these read SKLV…KVQC and GSWV…RRIQ.

It belongs to the beta/gamma-crystallin family. As to quaternary structure, homo/heterodimer, or complexes of higher-order. The structure of beta-crystallin oligomers seems to be stabilized through interactions between the N-terminal arms.

Functionally, crystallins are the dominant structural components of the vertebrate eye lens. This chain is Beta-crystallin A1, found in Rana temporaria (European common frog).